Reading from the N-terminus, the 369-residue chain is N-succinyl-L-Arg/Lys racemase (369 aa).

Substrate contacts are provided by residues Tyr-26, Asp-51, 161–163, and 191–193; these read KMK and DVN. Asp-191, Glu-218, and Asp-243 together coordinate Mg(2+). Substrate-binding positions include Lys-267, 295-296, and 320-322; these read SM and ELT.

It belongs to the mandelate racemase/muconate lactonizing enzyme family. Mg(2+) is required as a cofactor.

Catalyzes efficient racemization of N-succinyl-L-Arg and N-succinyl-L-Lys, suggesting that these are physiological substrates of this enzyme. Has low activity with L-Asp-L-Lys, and even lower activity with L-Leu-L-Arg, L-Leu-L-Lys, N-succinyl-L-His and N-succinyl-L-Met (in vitro). This chain is N-succinyl-L-Arg/Lys racemase, found in Bacillus cereus (strain ATCC 14579 / DSM 31 / CCUG 7414 / JCM 2152 / NBRC 15305 / NCIMB 9373 / NCTC 2599 / NRRL B-3711).